The primary structure comprises 722 residues: MEKYKILECIGHGSFGRIYKVQRLKDGALLAQKEIHFGNITRQEKQYIADEVNILRNLKHPNIVQYCGEELNRSAQVINLYMEYCGHGDLANLIQRYKEEKKRFTEQEVLKFFTQLLLALYRCHYGENAPACDSQWPREIFHPKQSVLHRDIKPANIFLDENNSVKLGDFGLSKLLDNTRVFTQSYVGTPYYMSPEIIRSSPYSAKSDVWALGCVIFEICMLTHPFEGRSYLELQRNICQGNLSCWDHHYSDDVFLLIRHCLEVNSDLRPTTYQLLRSPILSDIRSKLESERVVLEQSDLLHKKHQMLIQLENDLQFREQRLSARESELENVIASRLAQREEILRRELEKQLRDMDARYQRHMQTVVNSMQKMRVTSPVDHNEQPESSTAEMFVDCTIEASQSPLLHIPKLGISKPLQTLSCPGFTLTTQQPILKRPTLRKELSSRALHTTATLMKYRANASSLRTTPIDKDGQITSLQQKNGTSNQVADCMNKLLHTSLDGKKLSPSELCNKFSDGEGLPNRKVSKLSVESDETAVSASSGESVPTDSTLTDTKSKSVFVHPPSPQSLYVEKLEKLNIRSDEVSKPSKASKTLHGYALPSLASPYDVHAEEKIARENEMDGNFKTMKINQHPDEYVLRTPKKIQLLEGQKRSPVKQLGRLGYNKLRRSAMDNAGLELRKAASTSNYTSLQSRTLPGSWRDDEEEIPRPFLRKMLDARMMRA.

A Protein kinase domain is found at 4–281 (YKILECIGHG…TYQLLRSPIL (278 aa)). ATP is bound by residues 10–18 (IGHGSFGRI) and K33. D151 acts as the Proton acceptor in catalysis. Residues 528-557 (LSVESDETAVSASSGESVPTDSTLTDTKSK) are disordered. The segment covering 535–546 (TAVSASSGESVP) has biased composition (polar residues).

This sequence belongs to the protein kinase superfamily. Ser/Thr protein kinase family. NIMA subfamily.

It localises to the cytoplasm. It is found in the cytoskeleton. Its subcellular location is the microtubule organizing center. The protein localises to the spindle pole body. It catalyses the reaction L-seryl-[protein] + ATP = O-phospho-L-seryl-[protein] + ADP + H(+). The enzyme catalyses L-threonyl-[protein] + ATP = O-phospho-L-threonyl-[protein] + ADP + H(+). Promotes chromosome condensation and nuclear envelope dynamics during mitosis. Activity appears at metaphase-anaphase transition. In Schizosaccharomyces pombe (strain 972 / ATCC 24843) (Fission yeast), this protein is G2-specific protein kinase fin1 (fin1).